A 251-amino-acid chain; its full sequence is 5'-nucleotidase SurE (251 aa).

4 residues coordinate a divalent metal cation: Asp8, Asp9, Ser39, and Asn95.

It belongs to the SurE nucleotidase family. Requires a divalent metal cation as cofactor.

It localises to the cytoplasm. It catalyses the reaction a ribonucleoside 5'-phosphate + H2O = a ribonucleoside + phosphate. Its function is as follows. Nucleotidase that shows phosphatase activity on nucleoside 5'-monophosphates. The chain is 5'-nucleotidase SurE from Ralstonia pickettii (strain 12J).